We begin with the raw amino-acid sequence, 1522 residues long: Rho guanine nucleotide exchange factor 11 (1522 aa).

A disordered region spans residues 1–40; it reads MSVRLPQSIDRLSSLSSLGDSAPERKSPSHHRQPSDASET. A phosphoserine mark is found at Ser2, Ser14, Ser16, and Ser35. The region spanning 47 to 126 is the PDZ domain; it reads CVIIQKDQHG…LTLLGSSPSS (80 aa). Disordered stretches follow at residues 128-175 and 200-231; these read GISG…PEVQ and YGDT…ERFP. Over residues 149-161 the composition is skewed to pro residues; the sequence is PSPPPPPPLPPPQ. Ser245 and Ser251 each carry phosphoserine. Residue Thr254 is modified to Phosphothreonine. Residues Ser255 and Ser271 each carry the phosphoserine modification. Residues 263-286 are disordered; sequence AQHHRRQGSDAAVPSTGDQGVDQS. An RGSL domain is found at 306-486; sequence ESDIIFQDLE…NTYMSHAGIR (181 aa). Positions 444-470 form a coiled coil; the sequence is LRERQVAEKQLAALGDILSKYEEDRSA. Residues 490–555 are disordered; sequence ARPSNTAEKA…SSQSTFHIPL (66 aa). A compositionally biased stretch (basic and acidic residues) spans 521–533; the sequence is SKKEKDALEDKKR. Ser556, Ser635, and Ser663 each carry phosphoserine. Residues 573-680 are disordered; it reads ENNQQYDAPE…FTPKMGRRSI (108 aa). Positions 601–637 are enriched in basic and acidic residues; it reads DSSRSEIRLGRSESLKGREEMKRSRKAENVPRSRSDV. A compositionally biased stretch (low complexity) spans 651 to 664; sequence SASSSTSSLSTRSL. Thr668 and Thr672 each carry phosphothreonine. Residues 734 to 923 enclose the DH domain; it reads DRQEVINELF…REILKYVNEA (190 aa). A PH domain is found at 965 to 1079; it reads KMIHEGPLTW…WMELLEEAVR (115 aa). Residues 1084–1141 are disordered; it reads HPGAAPMPVHPPPPGPREPAQQGPTPSRVELDDSDVFHGEPEPEELPGGTGSQQRVQG. Pro residues predominate over residues 1091–1100; the sequence is PVHPPPPGPR. A compositionally biased stretch (basic and acidic residues) spans 1112–1124; sequence VELDDSDVFHGEP. Ser1155 is modified (phosphoserine). 3 disordered regions span residues 1223–1320, 1332–1423, and 1453–1522; these read ETQA…AGGY, KVVP…RDVG, and LGGE…SPGP. Polar residues predominate over residues 1236-1245; it reads PTPSVISVTS. Phosphoserine is present on residues Ser1295 and Ser1300. Positions 1338-1353 are enriched in low complexity; sequence PESGQSEPGPPEVEGG. Ser1457 and Ser1458 each carry phosphoserine. A phosphothreonine mark is found at Thr1462 and Thr1475. The residue at position 1480 (Ser1480) is a Phosphoserine. A compositionally biased stretch (acidic residues) spans 1503 to 1513; that stretch reads DGSDAPLEDST.

In terms of assembly, interacts with GNA12 and GNA13 through the RGS domain. Interacts with RHOA, PLXNB1 and PLXNB2. Interacts with SLC1A6. Interacts (via DH domain) with GCSAM (via C-terminus). Found in a complex with ARHGEF11 and ARHGEF12; binding to ARHGEF11 and ARHGEF12 enhances CDC42 GEF activity of PLEKHG4B, and PLEKHG4B, in turn, inhibits ARHGEF11- and ARHGEF12-mediated RHOA activation. In terms of processing, phosphorylated by MAP kinase p38 (MAPK11, MAPK12, MAPK13 and/or MAPK14). Ubiquitinated by the BCR(KLHL20) E3 ubiquitin ligase complex when previously phosphorylated by MAP kinase p38 (MAPK11, MAPK12, MAPK13 and/or MAPK14), leading to its degradation, thereby restricting RhoA activity and facilitating growth cone spreading and neurite outgrowth. In terms of tissue distribution, ubiquitously expressed.

Its subcellular location is the cytoplasm. It localises to the membrane. May play a role in the regulation of RhoA GTPase by guanine nucleotide-binding alpha-12 (GNA12) and alpha-13 (GNA13). Acts as guanine nucleotide exchange factor (GEF) for RhoA GTPase and may act as GTPase-activating protein (GAP) for GNA12 and GNA13. Involved in neurotrophin-induced neurite outgrowth. In Homo sapiens (Human), this protein is Rho guanine nucleotide exchange factor 11 (ARHGEF11).